The primary structure comprises 581 residues: Threonine--tRNA ligase (581 aa).

The catalytic stretch occupies residues 185 to 478 (DHRKLGKELD…LIEHYGGAFP (294 aa)). Positions 278, 329, and 455 each coordinate Zn(2+).

The protein belongs to the class-II aminoacyl-tRNA synthetase family. Homodimer. Requires Zn(2+) as cofactor.

It is found in the cytoplasm. It carries out the reaction tRNA(Thr) + L-threonine + ATP = L-threonyl-tRNA(Thr) + AMP + diphosphate + H(+). Its function is as follows. Catalyzes the attachment of threonine to tRNA(Thr) in a two-step reaction: L-threonine is first activated by ATP to form Thr-AMP and then transferred to the acceptor end of tRNA(Thr). Also edits incorrectly charged L-seryl-tRNA(Thr). This is Threonine--tRNA ligase from Borreliella afzelii (strain PKo) (Borrelia afzelii).